Reading from the N-terminus, the 161-residue chain is Large ribosomal subunit protein bL17 (161 aa).

A compositionally biased stretch (basic and acidic residues) spans 132–144 (ARAKRAEDNRKAL). Residues 132-161 (ARAKRAEDNRKALEAQQAQAEAETTGETKA) form a disordered region. The span at 145-161 (EAQQAQAEAETTGETKA) shows a compositional bias: low complexity.

This sequence belongs to the bacterial ribosomal protein bL17 family. In terms of assembly, part of the 50S ribosomal subunit. Contacts protein L32.

The protein is Large ribosomal subunit protein bL17 of Koribacter versatilis (strain Ellin345).